The following is a 198-amino-acid chain: Shikimate kinase (198 aa).

An ATP-binding site is contributed by 26 to 31; it reads GSGKSQ. Residue S30 coordinates Mg(2+). 3 residues coordinate substrate: D48, R72, and G94. R132 provides a ligand contact to ATP. R151 lines the substrate pocket. Q167 contributes to the ATP binding site.

This sequence belongs to the shikimate kinase family. Monomer. Mg(2+) is required as a cofactor.

The protein localises to the cytoplasm. The enzyme catalyses shikimate + ATP = 3-phosphoshikimate + ADP + H(+). The protein operates within metabolic intermediate biosynthesis; chorismate biosynthesis; chorismate from D-erythrose 4-phosphate and phosphoenolpyruvate: step 5/7. Catalyzes the specific phosphorylation of the 3-hydroxyl group of shikimic acid using ATP as a cosubstrate. The sequence is that of Shikimate kinase from Prochlorococcus marinus (strain NATL2A).